Reading from the N-terminus, the 134-residue chain is uncharacterized protein (134 aa).

A helical transmembrane segment spans residues 110 to 130; that stretch reads SLGVLTDILFLVLYSLLIHLS.

Its subcellular location is the membrane. This is an uncharacterized protein from Saccharomyces cerevisiae (strain ATCC 204508 / S288c) (Baker's yeast).